The following is a 501-amino-acid chain: MEQQDPIKKEGRLTPVLALATLIAAFGSSFQYGYNVAAVNSPAELMKAFYNETHYSRFSEYISEFSLTLLWSISVSMFPFGGFVGSLMVGPLVNRLGRKGTLLFNNIFSIVPAILMGTSKTARSYEMIILSRLLVGICAGLSSNVVPMYLGELSPKNLRGALGVVPQLFITVGILVAQIVGLRSLLATEEGWPILLGLTAIPAALQLLLLPFFPESPRYLLIQKKDAAAAKNALKRLRGWDDVDAEMEEIQLEDEAEKAAGIISVLTMFRMRSLRWQVISIIILMGGQQLSGVNAIYYYADQIYLSAGVKDQDVQYVTVGTGAVNVLMTICAVFVVEYLGRRALLLLGFSVCFIACCVLTVALALQDRVSWMPYISIVCVISYVIGHALGPSPIPALLITEVFLQSSRSAAYMVGGTVHWLSNFAVGLVFPFIQVGLGAYSFIIFAVICLLTTIYIFLIVPETKGKTFVEINHIFTKMNKVSDVHPAKDELKDIPLSAVEL.

An N-acetylmethionine modification is found at methionine 1. The Cytoplasmic segment spans residues 1–18 (MEQQDPIKKEGRLTPVLA). The chain crosses the membrane as a helical span at residues 19 to 39 (LATLIAAFGSSFQYGYNVAAV). Tyrosine 32 is a D-fructose binding site. The Extracellular segment spans residues 40 to 68 (NSPAELMKAFYNETHYSRFSEYISEFSLT). A glycan (N-linked (GlcNAc...) asparagine) is linked at asparagine 51. A helical membrane pass occupies residues 69–91 (LLWSISVSMFPFGGFVGSLMVGP). Residues 92–98 (LVNRLGR) lie on the Cytoplasmic side of the membrane. A helical transmembrane segment spans residues 99–119 (KGTLLFNNIFSIVPAILMGTS). At 120 to 126 (KTARSYE) the chain is on the extracellular side. A helical membrane pass occupies residues 127–149 (MIILSRLLVGICAGLSSNVVPMY). Topologically, residues 150–161 (LGELSPKNLRGA) are cytoplasmic. A helical transmembrane segment spans residues 162–182 (LGVVPQLFITVGILVAQIVGL). A D-fructose-binding site is contributed by glutamine 167. At 183–192 (RSLLATEEGW) the chain is on the extracellular side. The helical transmembrane segment at 193–213 (PILLGLTAIPAALQLLLLPFF) threads the bilayer. The Cytoplasmic segment spans residues 214–277 (PESPRYLLIQ…MFRMRSLRWQ (64 aa)). The chain crosses the membrane as a helical span at residues 278-298 (VISIIILMGGQQLSGVNAIYY). D-fructose-binding positions include glutamine 288 and 296–298 (IYY). Over 299-313 (YADQIYLSAGVKDQD) the chain is Extracellular. Residues 314–334 (VQYVTVGTGAVNVLMTICAVF) traverse the membrane as a helical segment. Residues 335–342 (VVEYLGRR) are Cytoplasmic-facing. A helical transmembrane segment spans residues 343–363 (ALLLLGFSVCFIACCVLTVAL). The Extracellular portion of the chain corresponds to 364 to 371 (ALQDRVSW). The helical transmembrane segment at 372-394 (MPYISIVCVISYVIGHALGPSPI) threads the bilayer. Histidine 387 is a binding site for D-fructose. Residues 395-412 (PALLITEVFLQSSRSAAY) lie on the Cytoplasmic side of the membrane. Residues 413 to 433 (MVGGTVHWLSNFAVGLVFPFI) traverse the membrane as a helical segment. 419–420 (HW) contacts D-fructose. The Extracellular portion of the chain corresponds to 434–439 (QVGLGA). The helical transmembrane segment at 440–460 (YSFIIFAVICLLTTIYIFLIV) threads the bilayer. Residues 461-501 (PETKGKTFVEINHIFTKMNKVSDVHPAKDELKDIPLSAVEL) lie on the Cytoplasmic side of the membrane.

This sequence belongs to the major facilitator superfamily. Sugar transporter (TC 2.A.1.1) family. Glucose transporter subfamily.

Its subcellular location is the apical cell membrane. The protein resides in the cell membrane. It is found in the sarcolemma. It catalyses the reaction D-fructose(out) = D-fructose(in). Its function is as follows. Functions as a fructose transporter that has only low activity with other monosaccharides. Can mediate the uptake of deoxyglucose, but with low efficiency. Essential for fructose uptake in the small intestine. Plays a role in the regulation of salt uptake and blood pressure in response to dietary fructose. Required for the development of high blood pressure in response to high dietary fructose intake. This chain is Solute carrier family 2, facilitated glucose transporter member 5, found in Equus caballus (Horse).